A 301-amino-acid chain; its full sequence is GTPase Era (301 aa).

In terms of domain architecture, Era-type G spans 7–173 (KSGFVALLGR…LNTINKYLPE (167 aa)). The G1 stretch occupies residues 15-22 (GRPNVGKS). 15-22 (GRPNVGKS) is a binding site for GTP. The interval 41 to 45 (QTTRN) is G2. The interval 62-65 (DTPG) is G3. Residues 62 to 66 (DTPGI) and 123 to 126 (NKVD) contribute to the GTP site. The tract at residues 123–126 (NKVD) is G4. Positions 152-154 (ISA) are G5. A KH type-2 domain is found at 204 to 281 (TSQEVPHATA…NLRLWVKVQH (78 aa)).

This sequence belongs to the TRAFAC class TrmE-Era-EngA-EngB-Septin-like GTPase superfamily. Era GTPase family. As to quaternary structure, monomer.

The protein resides in the cytoplasm. Its subcellular location is the cell membrane. Functionally, an essential GTPase that binds both GDP and GTP, with rapid nucleotide exchange. Plays a role in 16S rRNA processing and 30S ribosomal subunit biogenesis and possibly also in cell cycle regulation and energy metabolism. This Lactobacillus helveticus (strain DPC 4571) protein is GTPase Era.